A 129-amino-acid chain; its full sequence is Small ribosomal subunit protein uS11 (129 aa).

The protein belongs to the universal ribosomal protein uS11 family. As to quaternary structure, part of the 30S ribosomal subunit. Interacts with proteins S7 and S18. Binds to IF-3.

Its function is as follows. Located on the platform of the 30S subunit, it bridges several disparate RNA helices of the 16S rRNA. Forms part of the Shine-Dalgarno cleft in the 70S ribosome. This is Small ribosomal subunit protein uS11 from Salmonella newport (strain SL254).